The primary structure comprises 94 residues: UPF0381 protein YfcZ (94 aa).

It belongs to the UPF0381 family.

This is UPF0381 protein YfcZ (yfcZ) from Escherichia coli O6:H1 (strain CFT073 / ATCC 700928 / UPEC).